A 378-amino-acid polypeptide reads, in one-letter code: S-adenosylmethionine synthase (378 aa).

Histidine 15 provides a ligand contact to ATP. Aspartate 17 is a binding site for Mg(2+). Glutamate 43 lines the K(+) pocket. Residues glutamate 56 and glutamine 99 each coordinate L-methionine. Residues 99–109 form a flexible loop region; that stretch reads QSPDINQGINR. ATP-binding positions include 164 to 166, 230 to 231, aspartate 239, 245 to 246, alanine 262, and lysine 266; these read DAK, RF, and RK. Aspartate 239 serves as a coordination point for L-methionine. Lysine 270 serves as a coordination point for L-methionine.

This sequence belongs to the AdoMet synthase family. Homotetramer; dimer of dimers. It depends on Mg(2+) as a cofactor. K(+) is required as a cofactor.

The protein resides in the cytoplasm. The catalysed reaction is L-methionine + ATP + H2O = S-adenosyl-L-methionine + phosphate + diphosphate. Its pathway is amino-acid biosynthesis; S-adenosyl-L-methionine biosynthesis; S-adenosyl-L-methionine from L-methionine: step 1/1. Functionally, catalyzes the formation of S-adenosylmethionine (AdoMet) from methionine and ATP. The overall synthetic reaction is composed of two sequential steps, AdoMet formation and the subsequent tripolyphosphate hydrolysis which occurs prior to release of AdoMet from the enzyme. The polypeptide is S-adenosylmethionine synthase (Buchnera aphidicola subsp. Acyrthosiphon pisum (strain 5A)).